Reading from the N-terminus, the 87-residue chain is MKTLLLTLVVVTIVCLDLGYTMKCKICNFDTCRAGELKVCASGEKYCFKESWREARGTRIERGCAATCPKGSVYGLYVLCCTTDDCN.

The N-terminal stretch at 1-21 is a signal peptide; it reads MKTLLLTLVVVTIVCLDLGYT. 5 cysteine pairs are disulfide-bonded: cysteine 24–cysteine 47, cysteine 27–cysteine 32, cysteine 40–cysteine 64, cysteine 68–cysteine 80, and cysteine 81–cysteine 86.

In terms of tissue distribution, expressed by the venom gland.

It is found in the secreted. Functionally, binds and inhibits muscular and neuronal nicotinic acetylcholine receptors (nAChR). Is a reversible antagonist of muscle nAChR (alpha-1-beta-1-delta-epsilon/CHRNA1-CHRNB1-CHRND-CHRNE) (IC(50)=10 nM) and a potent and poorly reversible antagonist of the neuronal alpha-7/CHRNA7 nAChR (IC(50)=50 nM). May exhibit differential affinities for the two binding sites on the muscle nAChR. The protein is Candoxin of Bungarus candidus (Malayan krait).